We begin with the raw amino-acid sequence, 476 residues long: Protein transport protein Sec61 subunit alpha (476 aa).

Topologically, residues 2–33 (GIKFLEVIKPFCAVLPEIQKPERKIQFREKVL) are cytoplasmic. A helical membrane pass occupies residues 34–53 (WTAITLFIFLVCCQIPLFGI). The Lumenal segment spans residues 54–76 (MSSDSADPFYWMRVILASNRGTL). A helical transmembrane segment spans residues 77–96 (MELGISPIVTSDLIMQLLAG). The Cytoplasmic segment spans residues 97 to 117 (AKIIEVGDSPKDRALFNGAQK). The helical transmembrane segment at 118 to 138 (LFGMIITIGQAIVYVMTGMYG) threads the bilayer. Topologically, residues 139–144 (DPSEMG) are lumenal. Residues 145-165 (AGICLVIIIQLFVAGLIVLLL) form a helical membrane-spanning segment. The Cytoplasmic portion of the chain corresponds to 166–172 (DELLQKG). The chain crosses the membrane as a helical span at residues 173–193 (YGLGSGISLLIATNICETIVW). The Lumenal segment spans residues 194 to 240 (KAFSPTTVNTGRGTEFEGAIIALFHLLATRTDKVRALREAFYRQNLP). The chain crosses the membrane as a helical span at residues 241 to 261 (NLMNLIATVFVFAVVIYFQGF). Residues 262–288 (RVDLPIKSARYRGQYNTYPIKLFYTSN) lie on the Cytoplasmic side of the membrane. The chain crosses the membrane as a helical span at residues 289–309 (IPIILQSALVSNLYVISQMLS). Over 310–354 (TRFSGNFIVNLLGTWSDTSTGGPARAYPVGGLCYFLSPPESFGSV) the chain is Lumenal. The helical transmembrane segment at 355–375 (LDDPVHAAIYIVFMLGSCAFF) threads the bilayer. The Cytoplasmic segment spans residues 376-420 (SKTWIEVSGSSAKDVAKQLKEQQMVMRGHRETSMVHELNRYIPTA). A helical transmembrane segment spans residues 421–441 (AAFGGLCIGGLSVMADFLGAI). Residues 442–445 (GSGT) lie on the Lumenal side of the membrane. The helical transmembrane segment at 446–462 (GILLAVTIIYQYFEIFV) threads the bilayer. Residues 463-476 (KEQSEMGSMGGLFF) are Cytoplasmic-facing.

This sequence belongs to the SecY/SEC61-alpha family. The SEC61 channel-forming translocon complex consists of channel-forming core components SEC61A1, SEC61B and SEC61G and different auxiliary components such as SEC62 and SEC63. The SEC61 channel associates with the multi-pass translocon (MPT) complex.

The protein resides in the endoplasmic reticulum membrane. Its function is as follows. Component of SEC61 channel-forming translocon complex that mediates transport of signal peptide-containing precursor polypeptides across the endoplasmic reticulum (ER). Forms a ribosome receptor and a gated pore in the ER membrane, both functions required for cotranslational translocation of nascent polypeptides. May cooperate with auxiliary protein SEC62, SEC63 and HSPA5/BiP to enable post-translational transport of small presecretory proteins. The SEC61 channel is also involved in ER membrane insertion of transmembrane proteins: it mediates membrane insertion of the first few transmembrane segments of proteins, while insertion of subsequent transmembrane regions of multi-pass membrane proteins is mediated by the multi-pass translocon (MPT) complex. The protein is Protein transport protein Sec61 subunit alpha (sec61a) of Boreogadus saida (Polar cod).